The chain runs to 466 residues: Adenosylhomocysteinase (466 aa).

Substrate is bound by residues threonine 57, aspartate 132, and glutamate 192. 193–195 contributes to the NAD(+) binding site; that stretch reads TTT. 2 residues coordinate substrate: lysine 222 and aspartate 226. NAD(+)-binding positions include asparagine 227, 256–261, glutamate 279, asparagine 314, 335–337, and asparagine 380; these read GYGDVG and IGH.

It belongs to the adenosylhomocysteinase family. The cofactor is NAD(+).

It is found in the cytoplasm. It carries out the reaction S-adenosyl-L-homocysteine + H2O = L-homocysteine + adenosine. It functions in the pathway amino-acid biosynthesis; L-homocysteine biosynthesis; L-homocysteine from S-adenosyl-L-homocysteine: step 1/1. May play a key role in the regulation of the intracellular concentration of adenosylhomocysteine. This Brucella melitensis biotype 2 (strain ATCC 23457) protein is Adenosylhomocysteinase.